The following is a 371-amino-acid chain: Peptidyl-prolyl cis-trans isomerase D (371 aa).

The PPIase cyclophilin-type domain occupies 11–172; the sequence is FFDIQIGNEK…KDVTIVECGE (162 aa). Residues 175–195 form a disordered region; it reads GQDYDDADKQTPDATGDPYED. TPR repeat units follow at residues 214–247, 267–300, and 308–341; these read ASEL…LHEF, FALH…ANAA, and AKAY…APGD.

This sequence belongs to the cyclophilin-type PPIase family. PPIase D subfamily.

It localises to the cytoplasm. The catalysed reaction is [protein]-peptidylproline (omega=180) = [protein]-peptidylproline (omega=0). Functionally, PPIases accelerate the folding of proteins. It catalyzes the cis-trans isomerization of proline imidic peptide bonds in oligopeptides. This chain is Peptidyl-prolyl cis-trans isomerase D (cpr6), found in Aspergillus oryzae (strain ATCC 42149 / RIB 40) (Yellow koji mold).